Consider the following 138-residue polypeptide: Acidic phospholipase A2 Tbo-E6 (138 aa).

Positions 1–16 (MRTLWILAVLLLGVKG) are cleaved as a signal peptide. 7 disulfide bridges follow: Cys42-Cys131, Cys44-Cys60, Cys59-Cys111, Cys65-Cys138, Cys66-Cys104, Cys73-Cys97, and Cys91-Cys102. 3 residues coordinate Ca(2+): Tyr43, Gly45, and Gly47. His63 is a catalytic residue. Asp64 provides a ligand contact to Ca(2+). Residue Asp105 is part of the active site.

As to quaternary structure, monomer. Ca(2+) serves as cofactor. Expressed by the venom gland.

Its subcellular location is the secreted. The enzyme catalyses a 1,2-diacyl-sn-glycero-3-phosphocholine + H2O = a 1-acyl-sn-glycero-3-phosphocholine + a fatty acid + H(+). In terms of biological role, snake venom phospholipase A2 (PLA2) that impairs hemostasis. It weakly inhibits ADP-induced platelet aggregation when tested on platelet rich plasma from human and rabbit blood (15-25% of inhibition at 5-10 ug of enzyme), and dose-dependently inhibits blood coagulation, possibly by inhibiting thrombin activation. Exhibits high hydrolytic activities toward L-dipalmitoyl phosphatidylcholine. PLA2 catalyzes the calcium-dependent hydrolysis of the 2-acyl groups in 3-sn-phosphoglycerides. This Craspedocephalus borneensis (Borneo pit viper) protein is Acidic phospholipase A2 Tbo-E6.